The sequence spans 237 residues: Aspartate/glutamate leucyltransferase (237 aa).

The protein belongs to the R-transferase family. Bpt subfamily.

It localises to the cytoplasm. It carries out the reaction N-terminal L-glutamyl-[protein] + L-leucyl-tRNA(Leu) = N-terminal L-leucyl-L-glutamyl-[protein] + tRNA(Leu) + H(+). It catalyses the reaction N-terminal L-aspartyl-[protein] + L-leucyl-tRNA(Leu) = N-terminal L-leucyl-L-aspartyl-[protein] + tRNA(Leu) + H(+). In terms of biological role, functions in the N-end rule pathway of protein degradation where it conjugates Leu from its aminoacyl-tRNA to the N-termini of proteins containing an N-terminal aspartate or glutamate. In Shewanella amazonensis (strain ATCC BAA-1098 / SB2B), this protein is Aspartate/glutamate leucyltransferase.